The primary structure comprises 968 residues: uncharacterized protein (968 aa).

An N-terminal signal peptide occupies residues 1-27; sequence MHSWKKKLVVSQLALACTLAITSQANA. Positions 703–968 constitute an Autotransporter domain; it reads GLADNGGAWV…SANVGVKYTW (266 aa).

This is an uncharacterized protein from Escherichia coli (strain K12).